The following is a 569-amino-acid chain: Proline--tRNA ligase (569 aa).

The protein belongs to the class-II aminoacyl-tRNA synthetase family. ProS type 1 subfamily. Homodimer.

It localises to the cytoplasm. It carries out the reaction tRNA(Pro) + L-proline + ATP = L-prolyl-tRNA(Pro) + AMP + diphosphate. Its function is as follows. Catalyzes the attachment of proline to tRNA(Pro) in a two-step reaction: proline is first activated by ATP to form Pro-AMP and then transferred to the acceptor end of tRNA(Pro). As ProRS can inadvertently accommodate and process non-cognate amino acids such as alanine and cysteine, to avoid such errors it has two additional distinct editing activities against alanine. One activity is designated as 'pretransfer' editing and involves the tRNA(Pro)-independent hydrolysis of activated Ala-AMP. The other activity is designated 'posttransfer' editing and involves deacylation of mischarged Ala-tRNA(Pro). The misacylated Cys-tRNA(Pro) is not edited by ProRS. In Nitratiruptor sp. (strain SB155-2), this protein is Proline--tRNA ligase.